We begin with the raw amino-acid sequence, 1250 residues long: SRC kinase signaling inhibitor 1 (1250 aa).

Basic and acidic residues predominate over residues 19-45; that stretch reads AEGRARSPREEVGPRDPGGRGEPDPER. The tract at residues 19-78 is disordered; the sequence is AEGRARSPREEVGPRDPGGRGEPDPERSSPPMLSADDAEYPREYRTLGGGGGGGSGGRRF. 2 positions are modified to phosphoserine: serine 47 and serine 52. Residues 65 to 75 are compositionally biased toward gly residues; sequence LGGGGGGGSGG. Serine 79 is subject to Phosphoserine. A Phosphothreonine modification is found at threonine 86. Residues serine 87, serine 98, serine 211, serine 233, serine 237, serine 247, and serine 293 each carry the phosphoserine modification. A Phosphotyrosine modification is found at tyrosine 309. Residues 352 to 448 are disordered; it reads ASRESSPTRR…RRDVKPDEDL (97 aa). Residues 354–364 are compositionally biased toward polar residues; sequence RESSPTRRLNN. Residues 365–374 show a composition bias toward low complexity; sequence LSPASHLASS. 3 positions are modified to phosphoserine: serine 366, serine 375, and serine 392. A compositionally biased stretch (low complexity) spans 381–399; that stretch reads PSGLPSGLPSGSPSRSRLS. Arginine 397 and arginine 404 each carry omega-N-methylarginine. Serine 411, serine 430, and serine 432 each carry phosphoserine. Residues 437 to 448 show a composition bias toward basic and acidic residues; the sequence is LERRDVKPDEDL. Tyrosine 464 carries the phosphotyrosine modification. The tract at residues 538-710 is disordered; the sequence is PSSPQKLADV…ASSTPAGQPT (173 aa). Residues 552 to 563 show a composition bias toward pro residues; that stretch reads GGPPPPHSPYSG. Phosphoserine occurs at positions 559, 562, and 566. Arginine 567 carries the omega-N-methylarginine modification. A phosphoserine mark is found at serine 569, serine 579, serine 581, serine 583, and serine 588. Low complexity predominate over residues 590–607; it reads GGKARSTGSASTAGAPPS. The span at 628–640 shows a compositional bias: basic and acidic residues; the sequence is KDTETRERMEAME. Phosphoserine occurs at positions 664 and 688. Phosphothreonine occurs at positions 691 and 704. Low complexity predominate over residues 701 to 710; sequence ASSTPAGQPT. Coiled-coil stretches lie at residues 712-753 and 793-813; these read VSRL…RALL and EELITQQLNDLEKSVEKIQRD. Residues 714–764 form an interaction with SNAP25 region; the sequence is RLQMQLHLRGLQNSASDLRGQLQQLRNVQLQNQESVRALLKPTEADVSMRV. Serine 911 and serine 933 each carry phosphoserine. Disordered regions lie at residues 924–982 and 1016–1094; these read GLDF…ERDW and DCAS…TGEV. Threonine 951 is modified (phosphothreonine). Position 1054 is a phosphoserine (serine 1054). A compositionally biased stretch (pro residues) spans 1069–1078; it reads KSPPPPPPRR. A phosphoserine mark is found at serine 1110 and serine 1127. A disordered region spans residues 1155 to 1250; the sequence is ELESGGSSVP…FGARNSSISF (96 aa). The span at 1217–1250 shows a compositional bias: polar residues; the sequence is PNETSSPGSEKPSGSRTSIPVLTSFGARNSSISF.

Belongs to the SRCIN1 family. As to quaternary structure, interacts with the N-terminal coiled-coil region of SNAP25. Interacts with BCAR1/p130Cas and SRC through its C-terminal domain. Interacts with CSK, CTTN, SORBS3/vinexin, SYP and MAPRE3/EB3. In terms of processing, tyrosine-phosphorylated in response to EGF and to cell adhesion to integrin ligands. In terms of tissue distribution, expressed predominantly in central nervous system with high levels detected in cortex, cerebellum, midbrain and spinal cord (at protein level). Also expressed in testis and epithelial-rich tissues such as mammary gland, lung and kidney.

Its subcellular location is the cytoplasm. It is found in the cytoskeleton. It localises to the cell projection. The protein localises to the axon. The protein resides in the dendrite. Its subcellular location is the presynapse. It is found in the postsynapse. It localises to the postsynaptic density. Functionally, acts as a negative regulator of SRC by activating CSK which inhibits SRC activity and downstream signaling, leading to impaired cell spreading and migration. Regulates dendritic spine morphology. Involved in calcium-dependent exocytosis. May play a role in neurotransmitter release or synapse maintenance. The sequence is that of SRC kinase signaling inhibitor 1 (Srcin1) from Mus musculus (Mouse).